Here is a 382-residue protein sequence, read N- to C-terminus: Alcohol dehydrogenase 1 (382 aa).

Residues C49, T51, H71, C101, C104, C107, C115, and C179 each coordinate Zn(2+). An alcohol is bound by residues T51 and H71. T51 serves as a coordination point for NAD(+). NAD(+)-binding positions include 204 to 209 (GLGAVG), D228, R233, T275, V298, 298 to 300 (VGV), F325, and R375.

The protein belongs to the zinc-containing alcohol dehydrogenase family. Homodimer. Zn(2+) serves as cofactor.

Its subcellular location is the cytoplasm. The enzyme catalyses a primary alcohol + NAD(+) = an aldehyde + NADH + H(+). It carries out the reaction a secondary alcohol + NAD(+) = a ketone + NADH + H(+). This protein is responsible for the conversion of alcohols to aldehydes in plants and is important for NAD metabolism during anaerobic respiration. The chain is Alcohol dehydrogenase 1 (ADH1) from Petunia hybrida (Petunia).